A 1196-amino-acid chain; its full sequence is Contactin rig-6 (1196 aa).

Residues 1–19 form the signal peptide; it reads MMMLIRCISIFLLFGFVNA. Residues N100 and N195 are each glycosylated (N-linked (GlcNAc...) asparagine). Ig-like C2-type domains lie at 144–225 and 232–319; these read PQIS…ARNS and PPIL…CSLS. 2 disulfide bridges follow: C169-C220 and C263-C316. Residue N343 is glycosylated (N-linked (GlcNAc...) asparagine). Ig-like C2-type domains are found at residues 355–438, 441–533, 539–626, and 631–730; these read PQIF…VKLR, PSIL…ALLT, PVFP…VQLI, and PSIK…EFVT. C372 and C420 form a disulfide bridge. An N-linked (GlcNAc...) asparagine glycan is attached at N457. 2 disulfide bridges follow: C462–C517 and C562–C610. N-linked (GlcNAc...) asparagine glycosylation is present at N644. A disulfide bond links C653 and C718. Fibronectin type-III domains are found at residues 736–844, 849–961, 963–1057, and 1064–1168; these read SPIA…TAPG, TIDN…SHGE, KKVS…TKQH, and LIGK…LGSP. N895, N925, N945, N974, N979, N986, N1002, and N1092 each carry an N-linked (GlcNAc...) asparagine glycan. The helical transmembrane segment at 1174 to 1194 threads the bilayer; sequence TTGSSDVPIPSLLLLLLLLLW. A lipid anchor (GPI-anchor amidated serine) is attached at S1177. Residues 1178–1196 constitute a propeptide, removed in mature form; it reads SDVPIPSLLLLLLLLLWRL.

This sequence belongs to the immunoglobulin superfamily. Contactin family. As to quaternary structure, interacts with sax-7; the interaction establishes synaptic connections between neurons. Expressed in neurons including the I1 and I3 pharyngeal interneurons, NSM and VNC motor neurons, HSN and CAN neurons, the ALM and PLM touch receptor neurons and other unidentified head neurons. Expressed in AVG interneurons. Also expressed in somatic muscles, the excretory canal, the excretory cell and the hypodermis.

It localises to the cell membrane. It is found in the perikaryon. The protein resides in the cell projection. The protein localises to the axon. Its subcellular location is the synapse. It localises to the cytoplasm. Functionally, probable cell adhesion protein involved in patterning of the nervous system, playing a role in ALM and PLM touch receptor axon growth and VNC axon navigation. By associating with the transmembrane protein sax-7, mediates axonal interactions to establish synaptic connections between the AVG interneuron and the two PHC sensory neurons. Also required for non-neuronal cell migration in the excretory canal, regulating excretory canal elongation and excretory cell morphogenesis. Plays a role in regulating male mating behavior. The polypeptide is Contactin rig-6 (Caenorhabditis elegans).